Reading from the N-terminus, the 525-residue chain is Neuropilin and tolloid-like protein 2 (525 aa).

Residues 1–22 (MALEQLCAVLKVLLITVLVVEG) form the signal peptide. Residues 23-347 (IAVAQKTQDG…GLFEQITKTH (325 aa)) are Extracellular-facing. 7 cysteine pairs are disulfide-bonded: Cys45/Cys72, Cys100/Cys122, Cys177/Cys207, Cys234/Cys256, Cys297/Cys309, Cys304/Cys322, and Cys316/Cys331. CUB domains follow at residues 45 to 159 (CGIW…YSFI) and 177 to 292 (CQFE…FTSF). The 37-residue stretch at 296–332 (PCTSSTFFCHSNMCINNSLVCNGVQNCAYPWDENHCK) folds into the LDL-receptor class A domain. An N-linked (GlcNAc...) asparagine glycan is attached at Asn311. The chain crosses the membrane as a helical span at residues 348–368 (GTIIGITSGIVLVLLIISILV). Residues 369–525 (QVKQPRKKVM…SAQASISIDF (157 aa)) lie on the Cytoplasmic side of the membrane. A Phosphoserine modification is found at Ser409.

In terms of assembly, interacts with GRIK2 and GRIK3, but neither with AMPA-nor with NMDA-sensitive glutamate receptors. N-glycosylated. In terms of tissue distribution, expressed in brain tissues, including cerebellar granule cells (at protein level).

It is found in the cell membrane. In terms of biological role, accessory subunit of neuronal kainate-sensitive glutamate receptors, GRIK2 and GRIK3. Increases kainate-receptor channel activity, slowing the decay kinetics of the receptors, without affecting their expression at the cell surface, and increasing the open probability of the receptor channels. Modulates the agonist sensitivity of kainate receptors. Slows the decay of kainate receptor-mediated excitatory postsynaptic currents (EPSCs), thus directly influencing synaptic transmission. In Mus musculus (Mouse), this protein is Neuropilin and tolloid-like protein 2 (Neto2).